Consider the following 153-residue polypeptide: Calmodulin-like protein 4 (153 aa).

EF-hand domains lie at 8 to 43, 44 to 79, 81 to 116, and 117 to 152; these read DQINEYKECFSLYDKQQRGKIKATDLLVSMRCLGAS, PTPGEVQRHLQTHGIDKNGELDFSTFLTIMHMQIKQ, DPKKEILLAMLMADKEKKGYIMASELRSKLMKLGEK, and LTHKEVDDLFKEAGIEPNGQVKYDTFIQRITIPVRD.

Belongs to the calmodulin family. As to quaternary structure, interacts with MYO7B; the interaction mediates the association of CALML4 with the IMAC/intermicrovillar adhesion complex. Interacts with MYO7A. Expressed in the small intestine, in both mature enterocytes on the villus surface and immature cells that reside in the crypt stem-cell niche.

Its subcellular location is the cell projection. The protein resides in the microvillus. As part of the intermicrovillar adhesion complex/IMAC plays a role in epithelial brush border differentiation, controlling microvilli organization and length. Acts as a light chain for MYO7B and is required for efficient targeting of the IMAC to the tips of border brush microvilli. The polypeptide is Calmodulin-like protein 4 (Calml4) (Mus musculus (Mouse)).